The chain runs to 158 residues: Phospholipase A2 AP-PLA2-II (158 aa).

Residues 1–16 (MKTFLILAMAVALAKA) form the signal peptide. The propeptide occupies 17 to 23 (QSTDEIT). 6 disulfides stabilise this stretch: Cys-51/Cys-158, Cys-53/Cys-69, Cys-68/Cys-138, Cys-75/Cys-131, Cys-85/Cys-124, and Cys-109/Cys-129. Residues Gly-54 and Gly-56 each coordinate Ca(2+). Residue His-72 is part of the active site. Asp-73 serves as a coordination point for Ca(2+). Asp-132 is a catalytic residue.

Belongs to the phospholipase A2 family. Group I subfamily. In terms of assembly, monomer. Ca(2+) is required as a cofactor. In terms of tissue distribution, expressed by the venom gland.

The protein resides in the secreted. The catalysed reaction is a 1,2-diacyl-sn-glycero-3-phosphocholine + H2O = a 1-acyl-sn-glycero-3-phosphocholine + a fatty acid + H(+). Starfish phospholipase A2 (PLA2) that has hemorrhagic and capillary permeability-increasing activities and hence is considered to be deeply involved in the local inflammation. Shows hemolytic activity only in the presence of phosphatidylcholine (PC). PLA2 catalyzes the calcium-dependent hydrolysis of the 2-acyl groups in 3-sn-phosphoglycerides. This Acanthaster planci (Crown-of-thorns starfish) protein is Phospholipase A2 AP-PLA2-II.